A 135-amino-acid chain; its full sequence is Small ribosomal subunit protein bS16 (135 aa).

The protein belongs to the bacterial ribosomal protein bS16 family.

This is Small ribosomal subunit protein bS16 from Prosthecochloris aestuarii (strain DSM 271 / SK 413).